A 175-amino-acid chain; its full sequence is uncharacterized protein (175 aa).

At 1–2 (ME) the chain is on the extracellular side. The chain crosses the membrane as a helical span at residues 3-23 (SIILSIAIFIGVLLGTSVGAG). Residues 24-151 (SGSSISPDVD…TGISTTMNAR (128 aa)) lie on the Cytoplasmic side of the membrane. The tract at residues 26 to 88 (SSISPDVDAG…DVGAGSGSSI (63 aa)) is disordered. A compositionally biased stretch (polar residues) spans 59–78 (FSGSSTSPDVDAGSGSSTSP). The helical transmembrane segment at 152 to 172 (VAVLITAAILSAPVTAIALLE) threads the bilayer. The Extracellular segment spans residues 173–175 (ARR).

It is found in the membrane. This is an uncharacterized protein from Saccharomyces cerevisiae (strain ATCC 204508 / S288c) (Baker's yeast).